The primary structure comprises 459 residues: Argininosuccinate lyase (459 aa).

Belongs to the lyase 1 family. Argininosuccinate lyase subfamily.

Its subcellular location is the cytoplasm. It catalyses the reaction 2-(N(omega)-L-arginino)succinate = fumarate + L-arginine. It functions in the pathway amino-acid biosynthesis; L-arginine biosynthesis; L-arginine from L-ornithine and carbamoyl phosphate: step 3/3. This is Argininosuccinate lyase from Bacillus licheniformis (strain ATCC 14580 / DSM 13 / JCM 2505 / CCUG 7422 / NBRC 12200 / NCIMB 9375 / NCTC 10341 / NRRL NRS-1264 / Gibson 46).